The following is an 86-amino-acid chain: Small ribosomal subunit protein bS16 (86 aa).

The protein belongs to the bacterial ribosomal protein bS16 family.

The protein is Small ribosomal subunit protein bS16 of Xylella fastidiosa (strain M23).